We begin with the raw amino-acid sequence, 391 residues long: Ferrochelatase (391 aa).

Positions 196 and 281 each coordinate Fe cation.

This sequence belongs to the ferrochelatase family.

The protein resides in the cytoplasm. The enzyme catalyses heme b + 2 H(+) = protoporphyrin IX + Fe(2+). Its pathway is porphyrin-containing compound metabolism; protoheme biosynthesis; protoheme from protoporphyrin-IX: step 1/1. In terms of biological role, catalyzes the ferrous insertion into protoporphyrin IX. This chain is Ferrochelatase, found in Prochlorococcus marinus (strain MIT 9211).